The sequence spans 157 residues: Mitochondrial import inner membrane translocase subunit TIM14 (157 aa).

Residues 1-56 lie on the Mitochondrial intermembrane side of the membrane; that stretch reads MAPLEAPILAIPGENNTHQQQQQQFQYTGQLQKKKAAEGSIEWYFDQTINFMGDHP. The helical transmembrane segment at 57 to 74 threads the bilayer; sequence VITGIGAFAVAYFAAGFI. At 75-157 the chain is on the mitochondrial matrix side; that stretch reads KSNQPGINGK…LDKRGGMKPK (83 aa). A J domain is found at 99 to 157; that stretch reads EALQILNLKETNLSKLKLKEQHRKLMMANHPDKGGSSYIATKINEAKDFLDKRGGMKPK.

The protein belongs to the TIM14 family. As to quaternary structure, heterodimer with PAM16. Component of the PAM complex, at least composed of mtHsp70, MGE1, TIM44, PAM16, PAM17 and PAM18.

The protein resides in the mitochondrion inner membrane. Functionally, essential component of the PAM complex, a complex required for the translocation of transit peptide-containing proteins from the inner membrane into the mitochondrial matrix in an ATP-dependent manner. In the complex, it is required to stimulate activity of mtHSP70 (SSC1). This Candida albicans (strain SC5314 / ATCC MYA-2876) (Yeast) protein is Mitochondrial import inner membrane translocase subunit TIM14 (PAM18).